We begin with the raw amino-acid sequence, 183 residues long: Dual-action ribosomal maturation protein DarP (183 aa).

Belongs to the DarP family.

The protein resides in the cytoplasm. Functionally, member of a network of 50S ribosomal subunit biogenesis factors which assembles along the 30S-50S interface, preventing incorrect 23S rRNA structures from forming. Promotes peptidyl transferase center (PTC) maturation. The polypeptide is Dual-action ribosomal maturation protein DarP (Citrobacter koseri (strain ATCC BAA-895 / CDC 4225-83 / SGSC4696)).